Consider the following 560-residue polypeptide: Phenylalanine--tRNA ligase beta subunit (560 aa).

One can recognise a B5 domain in the interval 279-354 (LTPKEFEVDL…IAYGYNNIEP (76 aa)). Mg(2+) contacts are provided by Asp332, Asp338, Glu341, and Asp342.

The protein belongs to the phenylalanyl-tRNA synthetase beta subunit family. Type 2 subfamily. In terms of assembly, tetramer of two alpha and two beta subunits. Mg(2+) is required as a cofactor.

It localises to the cytoplasm. The enzyme catalyses tRNA(Phe) + L-phenylalanine + ATP = L-phenylalanyl-tRNA(Phe) + AMP + diphosphate + H(+). This chain is Phenylalanine--tRNA ligase beta subunit, found in Thermococcus sibiricus (strain DSM 12597 / MM 739).